A 95-amino-acid polypeptide reads, in one-letter code: Protein TusB (95 aa).

This sequence belongs to the DsrH/TusB family. Heterohexamer, formed by a dimer of trimers. The hexameric TusBCD complex contains 2 copies each of TusB, TusC and TusD. The TusBCD complex interacts with TusE.

It localises to the cytoplasm. Part of a sulfur-relay system required for 2-thiolation of 5-methylaminomethyl-2-thiouridine (mnm(5)s(2)U) at tRNA wobble positions. The chain is Protein TusB from Escherichia coli O139:H28 (strain E24377A / ETEC).